Here is a 52-residue protein sequence, read N- to C-terminus: MKSYLLVSMLLLLNSILVYIYTKNVQILVSGITVAVIIYIVVKIIFERFVHQ.

2 helical membrane-spanning segments follow: residues Met-1 to Tyr-21 and Ile-27 to Glu-47.

In terms of assembly, forms a complex composed of CedA, CedA1 and CedA2.

Its subcellular location is the cell membrane. Part of the Ced system, which is involved in DNA import. The protein is DNA import protein CedA2 of Sulfolobus acidocaldarius (strain ATCC 33909 / DSM 639 / JCM 8929 / NBRC 15157 / NCIMB 11770).